The chain runs to 409 residues: MTEAYISLLIGDGYLPGALYLANRIRQFDNERDLVILVSDISIKVHRLLERFYSKVVVLLPDSKIATSPYNAPELHLLNRPDLENVLNKIHIFHQTHYEKLLYVDLDVLILNDFKGLFDIEVKEWELYAVSDIGWPDYFNSGLMLFKPSANVFRHLLALLTEVPGVSYDGGDQGLINYVFQNKWLRTGDDTKRCGVWYNLSFAFNMTLSNNYESLPSVLRNLTDIKLVHFIGIVKPWMLKPSFVNDFPDGSLDSFVAQWWEQFSSFENGEFLPLVFKNVESERIEEDSHETEEKVDEEVSISEPQDETTDFKYQFGHHSFEEPAPVLDYSTEGEAWKLNEEQLTNQWDVDAPAEPLPVPVEEDEREETKAEAELEELLPDIVQPEPPAPHVFPWEAYNEKPTRVFHDYR.

3 residues coordinate UDP: Leu-8, Tyr-14, and Arg-80. Residues Leu-8, Tyr-14, Arg-80, Lys-89, Asp-105, Asp-107, Asn-140, Ser-141, Asp-169, Asp-172, and Gln-173 each contribute to the UDP-alpha-D-glucose site. Residues Asp-105 and Asp-107 each contribute to the UDP site. Mn(2+) is bound by residues Asp-105 and Asp-107. Tyr-212 is a glycosylation site (O-linked (Glc...) tyrosine). His-229, Gly-232, and Lys-235 together coordinate UDP. A Mn(2+)-binding site is contributed by His-229. Residues Gly-232 and Lys-235 each coordinate UDP-alpha-D-glucose. The tract at residues 283 to 303 (RIEEDSHETEEKVDEEVSISE) is disordered.

It belongs to the glycosyltransferase 8 family. Glycogenin subfamily. The cofactor is Mn(2+).

The protein resides in the cytoplasm. It localises to the vacuole. The catalysed reaction is L-tyrosyl-[glycogenin] + UDP-alpha-D-glucose = alpha-D-glucosyl-L-tyrosyl-[glycogenin] + UDP + H(+). It carries out the reaction [1,4-alpha-D-glucosyl](n)-L-tyrosyl-[glycogenin] + UDP-alpha-D-glucose = [1,4-alpha-D-glucosyl](n+1)-L-tyrosyl-[glycogenin] + UDP + H(+). Glycogenin participates in the glycogen biosynthetic process along with glycogen synthase and glycogen branching enzyme. It catalyzes the formation of a short alpha (1,4)-glucosyl chain covalently attached via a glucose 1-O-tyrosyl linkage to internal tyrosine residues and these chains act as primers for the elongation reaction catalyzed by glycogen synthase. This Komagataella phaffii (strain GS115 / ATCC 20864) (Yeast) protein is Glycogenin.